Reading from the N-terminus, the 354-residue chain is Uroporphyrinogen decarboxylase (354 aa).

Residues 25–29, aspartate 75, tyrosine 152, threonine 207, and histidine 330 contribute to the substrate site; that span reads RQAGR.

The protein belongs to the uroporphyrinogen decarboxylase family. As to quaternary structure, homodimer.

It is found in the cytoplasm. It carries out the reaction uroporphyrinogen III + 4 H(+) = coproporphyrinogen III + 4 CO2. It participates in porphyrin-containing compound metabolism; protoporphyrin-IX biosynthesis; coproporphyrinogen-III from 5-aminolevulinate: step 4/4. Functionally, catalyzes the decarboxylation of four acetate groups of uroporphyrinogen-III to yield coproporphyrinogen-III. This is Uroporphyrinogen decarboxylase from Xanthomonas oryzae pv. oryzae (strain PXO99A).